We begin with the raw amino-acid sequence, 151 residues long: UPF0178 protein amb2838 (151 aa).

The protein belongs to the UPF0178 family.

The sequence is that of UPF0178 protein amb2838 from Paramagnetospirillum magneticum (strain ATCC 700264 / AMB-1) (Magnetospirillum magneticum).